The sequence spans 385 residues: Ethanolamine kinase 2 (385 aa).

Belongs to the choline/ethanolamine kinase family. In terms of tissue distribution, expressed in testis and liver. Low expression in ovary and kidney.

It catalyses the reaction ethanolamine + ATP = phosphoethanolamine + ADP + H(+). It functions in the pathway phospholipid metabolism; phosphatidylethanolamine biosynthesis; phosphatidylethanolamine from ethanolamine: step 1/3. Functionally, highly specific for ethanolamine phosphorylation. Does not have choline kinase activity. The protein is Ethanolamine kinase 2 (Etnk2) of Mus musculus (Mouse).